Reading from the N-terminus, the 1077-residue chain is Tudor domain-containing protein 7 (1077 aa).

2 HTH OST-type domains span residues 1-67 (MLRA…YAVV) and 220-289 (DLSV…LYST). Over residues 300-328 (VQNHSNNQAKPNVPVDSTPSSPPLQSSGN) the composition is skewed to polar residues. The segment at 300–331 (VQNHSNNQAKPNVPVDSTPSSPPLQSSGNIPK) is disordered. Residues 330–398 (PKDELKQKIS…PFKAILYAKS (69 aa)) form the HTH OST-type 3 domain. 2 Tudor domains span residues 494–551 (FLRV…FYTL) and 684–741 (LPFC…LLRD). Residues 841–883 (SRGGGAQASELSPPGLCKDHTSAVKKPDMQQSSSVPSFNMPPP) are disordered. Positions 857 to 868 (CKDHTSAVKKPD) are enriched in basic and acidic residues.

The protein belongs to the TDRD7 family.

It is found in the cytoplasm. Functionally, component of specific cytoplasmic RNA granules involved in post-transcriptional regulation of specific genes: probably acts by binding to specific mRNAs and regulating their translation. Probably required during spermatogenesis. This is Tudor domain-containing protein 7 (tdrd7) from Xenopus tropicalis (Western clawed frog).